The following is a 448-amino-acid chain: uncharacterized protein (448 aa).

Position 257–264 (257–264) interacts with ATP; that stretch reads GRNAQGKT.

This is an uncharacterized protein from Methanocaldococcus jannaschii (strain ATCC 43067 / DSM 2661 / JAL-1 / JCM 10045 / NBRC 100440) (Methanococcus jannaschii).